Consider the following 199-residue polypeptide: MSSPPSSLDELIAALRCLPGVGPKSAQRMAYHLLQRDQRGAARLAGALGHALEVLRHCQRCNNFSEEAVCQRCANPRRDPATLCVVEMPADLAMIEQTQSYNGLYYVLMGRLSPLDGVGPRELGLERLIARATDGEVKEVILATNFTNEGEATAHTVATLLGARGVKVSRISRGVPVGGELEHTDTGTIAQALVERRAF.

A C4-type zinc finger spans residues 58–73 (CQRCNNFSEEAVCQRC). A Toprim domain is found at 81-176 (ATLCVVEMPA…KVSRISRGVP (96 aa)).

Belongs to the RecR family.

Its function is as follows. May play a role in DNA repair. It seems to be involved in an RecBC-independent recombinational process of DNA repair. It may act with RecF and RecO. The protein is Recombination protein RecR of Azoarcus sp. (strain BH72).